Reading from the N-terminus, the 257-residue chain is UPF0246 protein BAV2675 (257 aa).

It belongs to the UPF0246 family.

This is UPF0246 protein BAV2675 from Bordetella avium (strain 197N).